Reading from the N-terminus, the 370-residue chain is Biotin synthase (370 aa).

Residues 56-283 (NAVQVSTLLS…KSHVRLSAGR (228 aa)) form the Radical SAM core domain. [4Fe-4S] cluster is bound by residues C71, C75, and C78. 4 residues coordinate [2Fe-2S] cluster: C115, C146, C206, and R278. The segment covering 327 to 344 (GLHPEPSDPHADDAHRDD) has biased composition (basic and acidic residues). The disordered stretch occupies residues 327–346 (GLHPEPSDPHADDAHRDDEQ).

The protein belongs to the radical SAM superfamily. Biotin synthase family. Homodimer. It depends on [4Fe-4S] cluster as a cofactor. Requires [2Fe-2S] cluster as cofactor.

The catalysed reaction is (4R,5S)-dethiobiotin + (sulfur carrier)-SH + 2 reduced [2Fe-2S]-[ferredoxin] + 2 S-adenosyl-L-methionine = (sulfur carrier)-H + biotin + 2 5'-deoxyadenosine + 2 L-methionine + 2 oxidized [2Fe-2S]-[ferredoxin]. The protein operates within cofactor biosynthesis; biotin biosynthesis; biotin from 7,8-diaminononanoate: step 2/2. Its function is as follows. Catalyzes the conversion of dethiobiotin (DTB) to biotin by the insertion of a sulfur atom into dethiobiotin via a radical-based mechanism. The polypeptide is Biotin synthase (Chromohalobacter salexigens (strain ATCC BAA-138 / DSM 3043 / CIP 106854 / NCIMB 13768 / 1H11)).